The chain runs to 844 residues: Proto-oncogene vav (844 aa).

One can recognise a Calponin-homology (CH) domain in the interval 1–119; it reads MELWRQCTHW…YTLSALSWTP (119 aa). The DH domain occupies 193–372; that stretch reads KRCCCLREIQ…RDLAQCVNEV (180 aa). Residues 401–503 enclose the PH domain; it reads RPKIDGELKI…WMEQFEMAIS (103 aa). A Phorbol-ester/DAG-type zinc finger spans residues 514–563; it reads GHDFQMFSFEETTSCKACQMLLRGTFYQGYRCQRCRAPAHKECLGRVPPC. The tract at residues 567-589 is disordered; it reads GQDYSGTMKKDKPHRRAQDKKRN. Residues 591-659 enclose the SH3 1 domain; sequence LGLPKMEVCQ…PCNRVKPYVH (69 aa). The SH2 domain maps to 670–764; sequence WYAGPMERAG…SLDTTLQFPF (95 aa). An SH3 2 domain is found at 781–841; it reads KIFGTAKARY…PSNYVEEDYS (61 aa). Phosphotyrosine occurs at positions 825 and 843.

Interacts with SHB. Interacts with APS, DOCK2, GRB2, GRB3, DOCK2, SLA, TEC and ZNF655/VIK. Interacts with SIAH2; without leading to its degradation. Associates with BLNK, PLCG1, GRB2 and NCK1 in a B-cell antigen receptor-dependent fashion. Interacts with CBLB; which inhibits tyrosine phosphorylation and down-regulates activity. May interact with CCPG1. Interacts with CLNK. Interacts with THEMIS2. Interacts with NEK3 and this interaction is prolactin-dependent. Interacts with ITK. Interacts with PTK2B/PYK2. Interacts with HCK. Interacts with PTK2B/PYK2. Interacts (via SH2 domain) with SYK. Interacts with ANKRD54. Interacts with CD6. Interacts with LCP2; this interaction plays a role in TCR-mediated cytokine production. In terms of processing, phosphorylated by FYN. Phosphorylated on tyrosine residues by HCK in response to IFNG and bacterial lipopolysaccharide (LPS).

In terms of biological role, couples tyrosine kinase signals with the activation of the Rho/Rac GTPases, thus leading to cell differentiation and/or proliferation. The sequence is that of Proto-oncogene vav (VAV1) from Bos taurus (Bovine).